The primary structure comprises 421 residues: Testin (421 aa).

The region spanning 92 to 199 (MILTNPVAAK…GDVKLPQEMD (108 aa)) is the PET domain. LIM zinc-binding domains follow at residues 234 to 297 (YSCY…CDSE), 299 to 359 (PRCA…NHAV), and 362 to 421 (QGCH…KMMS).

The protein belongs to the prickle / espinas / testin family. As to quaternary structure, interacts via LIM domain 1 with ZYX. Interacts (via LIM domain 3) with ENAH and VASP. Interacts with ALKBH4, talin, actin, alpha-actinin, GRIP1 and PXN. Interacts (via LIM domain 2) with ACTL7A (via N-terminus). Heterodimer with ACTL7A; the heterodimer interacts with ENAH to form a heterotrimer.

Its subcellular location is the cytoplasm. The protein resides in the cell junction. The protein localises to the focal adhesion. Scaffold protein that may play a role in cell adhesion, cell spreading and in the reorganization of the actin cytoskeleton. Plays a role in the regulation of cell proliferation. May act as a tumor suppressor. The protein is Testin (TES) of Loxodonta africana (African elephant).